We begin with the raw amino-acid sequence, 144 residues long: D-aminoacyl-tRNA deacylase (144 aa).

The Gly-cisPro motif, important for rejection of L-amino acids motif lies at 136-137 (GP).

Belongs to the DTD family. In terms of assembly, homodimer.

It localises to the cytoplasm. The catalysed reaction is glycyl-tRNA(Ala) + H2O = tRNA(Ala) + glycine + H(+). It catalyses the reaction a D-aminoacyl-tRNA + H2O = a tRNA + a D-alpha-amino acid + H(+). Functionally, an aminoacyl-tRNA editing enzyme that deacylates mischarged D-aminoacyl-tRNAs. Also deacylates mischarged glycyl-tRNA(Ala), protecting cells against glycine mischarging by AlaRS. Acts via tRNA-based rather than protein-based catalysis; rejects L-amino acids rather than detecting D-amino acids in the active site. By recycling D-aminoacyl-tRNA to D-amino acids and free tRNA molecules, this enzyme counteracts the toxicity associated with the formation of D-aminoacyl-tRNA entities in vivo and helps enforce protein L-homochirality. This Actinobacillus succinogenes (strain ATCC 55618 / DSM 22257 / CCUG 43843 / 130Z) protein is D-aminoacyl-tRNA deacylase.